An 812-amino-acid polypeptide reads, in one-letter code: INO80 complex subunit D (812 aa).

Disordered regions lie at residues 521–573 and 581–600; these read NSRK…LCMP and EVSS…ELPD. The span at 524–558 shows a compositional bias: basic residues; the sequence is KVQHHQQRKPRKKTKPPALTKKTKKKRRRGPRRPQ. Residues 585–595 are compositionally biased toward polar residues; sequence IRSPSTPNLST.

Belongs to the INO80D family. Component of the chromatin-remodeling INO80 complex.

It localises to the nucleus. In terms of biological role, putative regulatory component of the chromatin remodeling INO80 complex which is involved in transcriptional regulation, DNA replication and probably DNA repair. This is INO80 complex subunit D from Xenopus laevis (African clawed frog).